Reading from the N-terminus, the 848-residue chain is Aryl hydrocarbon receptor (848 aa).

Methionine 1 carries the N-acetylmethionine modification. Positions 1–10 are excised as a propeptide; it reads MNSSSANITY. The segment covering 1–10 has biased composition (polar residues); it reads MNSSSANITY. The interval 1 to 39 is disordered; that stretch reads MNSSSANITYASRKRRKPVQKTVKPIPAEGIKSNPSKRH. Short sequence motifs (nuclear localization signal) lie at residues 13–16 and 37–42; these read RKRR and KRHRDR. The bHLH domain maps to 27-80; sequence PAEGIKSNPSKRHRDRLNTELDRLASLLPFPQDVINKLDKLSVLRLSVSYLRAK. The tract at residues 38–66 is DNA-binding; sequence RHRDRLNTELDRLASLLPFPQDVINKLDK. Required for maintaining the overall integrity of the AHR:ARNT heterodimer and its transcriptional activity regions lie at residues 50-82, 118-126, and 266-268; these read LASL…AKSF, LLQALNGFV, and FAI. A Nuclear export signal motif is present at residues 64–72; the sequence is LDKLSVLRL. The PAS 1 domain maps to 111 to 181; that stretch reads NLQEGEFLLQ…RQLHWALNPS (71 aa). Residues 275 to 342 form the PAS 2 domain; the sequence is PSILEIRTKN…CAESHIRMIK (68 aa). In terms of domain architecture, PAC spans 348-386; it reads MIVFRLLTKNNRWTWVQSNARLLYKNGRPDYIIVTQRPL. Residues 824-848 form a disordered region; it reads TTHLQPLHHPSEARPFPDLTSSGFL.

In terms of assembly, homodimer. Heterodimer; efficient DNA binding requires dimerization with another bHLH protein. Interacts with ARNT; the heterodimer ARNT:AHR binds to core DNA sequence 5'-TGCGTG-3' within the dioxin response element (DRE) of target gene promoters and activates their transcription. Binds MYBBP1A. Interacts with coactivators including SRC-1, RIP140 and NOCA7, and with the corepressor SMRT. Interacts with NEDD8 and IVNS1ABP. Interacts with BMAL1. Interacts with HSP90AB1. Interacts with TIPARP; leading to mono-ADP-ribosylation of AHR and subsequent inhibition of AHR. In terms of processing, mono-ADP-ribosylated, leading to inhibit transcription activator activity of AHR. In terms of tissue distribution, expressed in all tissues tested including blood, brain, heart, kidney, liver, lung, pancreas and skeletal muscle. Expressed in retinal photoreceptors.

It localises to the cytoplasm. The protein resides in the nucleus. Its function is as follows. Ligand-activated transcription factor that enables cells to adapt to changing conditions by sensing compounds from the environment, diet, microbiome and cellular metabolism, and which plays important roles in development, immunity and cancer. Upon ligand binding, translocates into the nucleus, where it heterodimerizes with ARNT and induces transcription by binding to xenobiotic response elements (XRE). Regulates a variety of biological processes, including angiogenesis, hematopoiesis, drug and lipid metabolism, cell motility and immune modulation. Xenobiotics can act as ligands: upon xenobiotic-binding, activates the expression of multiple phase I and II xenobiotic chemical metabolizing enzyme genes (such as the CYP1A1 gene). Mediates biochemical and toxic effects of halogenated aromatic hydrocarbons. Next to xenobiotics, natural ligands derived from plants, microbiota, and endogenous metabolism are potent AHR agonists. Tryptophan (Trp) derivatives constitute an important class of endogenous AHR ligands. Acts as a negative regulator of anti-tumor immunity: indoles and kynurenic acid generated by Trp catabolism act as ligand and activate AHR, thereby promoting AHR-driven cancer cell motility and suppressing adaptive immunity. Regulates the circadian clock by inhibiting the basal and circadian expression of the core circadian component PER1. Inhibits PER1 by repressing the CLOCK-BMAL1 heterodimer mediated transcriptional activation of PER1. The heterodimer ARNT:AHR binds to core DNA sequence 5'-TGCGTG-3' within the dioxin response element (DRE) of target gene promoters and activates their transcription. This chain is Aryl hydrocarbon receptor, found in Homo sapiens (Human).